The following is a 239-amino-acid chain: Ubiquinone biosynthesis O-methyltransferase (239 aa).

S-adenosyl-L-methionine contacts are provided by arginine 44, glycine 63, aspartate 84, and methionine 128.

It belongs to the methyltransferase superfamily. UbiG/COQ3 family.

It carries out the reaction a 3-demethylubiquinol + S-adenosyl-L-methionine = a ubiquinol + S-adenosyl-L-homocysteine + H(+). The enzyme catalyses a 3-(all-trans-polyprenyl)benzene-1,2-diol + S-adenosyl-L-methionine = a 2-methoxy-6-(all-trans-polyprenyl)phenol + S-adenosyl-L-homocysteine + H(+). It functions in the pathway cofactor biosynthesis; ubiquinone biosynthesis. In terms of biological role, O-methyltransferase that catalyzes the 2 O-methylation steps in the ubiquinone biosynthetic pathway. In Xanthomonas axonopodis pv. citri (strain 306), this protein is Ubiquinone biosynthesis O-methyltransferase.